The following is a 754-amino-acid chain: Elongation factor G-1, mitochondrial (754 aa).

Residues 1–17 constitute a mitochondrion transit peptide; the sequence is MARFPTSPAPNRLLRLF. One can recognise a tr-type G domain in the interval 63–340; the sequence is DKLRNIGISA…GVVSFLPSPN (278 aa). Residues 72–79, 139–143, and 193–196 contribute to the GTP site; these read AHIDSGKT, DTPGH, and NKLD.

It belongs to the TRAFAC class translation factor GTPase superfamily. Classic translation factor GTPase family. EF-G/EF-2 subfamily. In terms of tissue distribution, expressed in cotyledons and adult leaves at the same levels.

It is found in the mitochondrion. It functions in the pathway protein biosynthesis; polypeptide chain elongation. Mitochondrial GTPase that catalyzes the GTP-dependent ribosomal translocation step during translation elongation. During this step, the ribosome changes from the pre-translocational (PRE) to the post-translocational (POST) state as the newly formed A-site-bound peptidyl-tRNA and P-site-bound deacylated tRNA move to the P and E sites, respectively. Catalyzes the coordinated movement of the two tRNA molecules, the mRNA and conformational changes in the ribosome. This Arabidopsis thaliana (Mouse-ear cress) protein is Elongation factor G-1, mitochondrial (MEFG1).